We begin with the raw amino-acid sequence, 899 residues long: Alanine--tRNA ligase, chloroplastic/mitochondrial (899 aa).

Zn(2+) contacts are provided by H581, H585, C683, and H687.

The protein belongs to the class-II aminoacyl-tRNA synthetase family. In terms of assembly, monomer. Requires Zn(2+) as cofactor.

Its subcellular location is the plastid. The protein resides in the chloroplast. It localises to the mitochondrion. The enzyme catalyses tRNA(Ala) + L-alanine + ATP = L-alanyl-tRNA(Ala) + AMP + diphosphate. Functionally, catalyzes the attachment of alanine to tRNA(Ala) in a two-step reaction: alanine is first activated by ATP to form Ala-AMP and then transferred to the acceptor end of tRNA(Ala). Also edits incorrectly charged tRNA(Ala) via its editing domain. The protein is Alanine--tRNA ligase, chloroplastic/mitochondrial of Micromonas pusilla (strain CCMP1545) (Picoplanktonic green alga).